Consider the following 307-residue polypeptide: Oxygen-dependent coproporphyrinogen-III oxidase (307 aa).

Ser-99 contributes to the substrate binding site. A divalent metal cation is bound by residues His-103 and His-113. The active-site Proton donor is His-113. 115–117 (NVR) contacts substrate. His-152 and His-182 together coordinate a divalent metal cation. The interval 247 to 282 (YVEFNLVFDRGTLFGLQSGGRTESILMSMPPVANWR) is important for dimerization. 265-267 (GGR) contacts substrate.

It belongs to the aerobic coproporphyrinogen-III oxidase family. Homodimer. It depends on a divalent metal cation as a cofactor.

It localises to the cytoplasm. It catalyses the reaction coproporphyrinogen III + O2 + 2 H(+) = protoporphyrinogen IX + 2 CO2 + 2 H2O. It functions in the pathway porphyrin-containing compound metabolism; protoporphyrin-IX biosynthesis; protoporphyrinogen-IX from coproporphyrinogen-III (O2 route): step 1/1. Its function is as follows. Involved in the heme biosynthesis. Catalyzes the aerobic oxidative decarboxylation of propionate groups of rings A and B of coproporphyrinogen-III to yield the vinyl groups in protoporphyrinogen-IX. The protein is Oxygen-dependent coproporphyrinogen-III oxidase of Burkholderia lata (strain ATCC 17760 / DSM 23089 / LMG 22485 / NCIMB 9086 / R18194 / 383).